We begin with the raw amino-acid sequence, 490 residues long: 23S rRNA (uracil(1939)-C(5))-methyltransferase RlmD (490 aa).

One can recognise a TRAM domain in the interval 14–75 (APAPAEYPID…SSFEKATLTA (62 aa)). [4Fe-4S] cluster-binding residues include Cys-88, Cys-98, Cys-101, and Cys-180. The S-adenosyl-L-methionine site is built by Gln-289, Phe-318, Asn-323, Glu-339, Asn-374, and Asp-395. The active-site Nucleophile is the Cys-446.

It belongs to the class I-like SAM-binding methyltransferase superfamily. RNA M5U methyltransferase family. RlmD subfamily.

It catalyses the reaction uridine(1939) in 23S rRNA + S-adenosyl-L-methionine = 5-methyluridine(1939) in 23S rRNA + S-adenosyl-L-homocysteine + H(+). Functionally, catalyzes the formation of 5-methyl-uridine at position 1939 (m5U1939) in 23S rRNA. This is 23S rRNA (uracil(1939)-C(5))-methyltransferase RlmD from Polaromonas naphthalenivorans (strain CJ2).